A 407-amino-acid chain; its full sequence is Probable tRNA sulfurtransferase (407 aa).

In terms of domain architecture, THUMP spans 61 to 165 (NEITYRLSKI…LDAIYMYEEV (105 aa)). Residues 183-184 (ML), 208-209 (HF), arginine 265, glycine 287, and glutamine 296 contribute to the ATP site.

Belongs to the ThiI family.

It localises to the cytoplasm. The catalysed reaction is [ThiI sulfur-carrier protein]-S-sulfanyl-L-cysteine + a uridine in tRNA + 2 reduced [2Fe-2S]-[ferredoxin] + ATP + H(+) = [ThiI sulfur-carrier protein]-L-cysteine + a 4-thiouridine in tRNA + 2 oxidized [2Fe-2S]-[ferredoxin] + AMP + diphosphate. The enzyme catalyses [ThiS sulfur-carrier protein]-C-terminal Gly-Gly-AMP + S-sulfanyl-L-cysteinyl-[cysteine desulfurase] + AH2 = [ThiS sulfur-carrier protein]-C-terminal-Gly-aminoethanethioate + L-cysteinyl-[cysteine desulfurase] + A + AMP + 2 H(+). Its pathway is cofactor biosynthesis; thiamine diphosphate biosynthesis. Its function is as follows. Catalyzes the ATP-dependent transfer of a sulfur to tRNA to produce 4-thiouridine in position 8 of tRNAs, which functions as a near-UV photosensor. Also catalyzes the transfer of sulfur to the sulfur carrier protein ThiS, forming ThiS-thiocarboxylate. This is a step in the synthesis of thiazole, in the thiamine biosynthesis pathway. The sulfur is donated as persulfide by IscS. The sequence is that of Probable tRNA sulfurtransferase from Staphylococcus aureus (strain N315).